The sequence spans 422 residues: FAD-dependent monooxygenase ptmM (422 aa).

A helical transmembrane segment spans residues 8-24 (VIIVGGSIAGLTLAHCL). Positions 35, 49, 108, 308, and 321 each coordinate FAD.

It belongs to the paxM FAD-dependent monooxygenase family. FAD is required as a cofactor.

Its subcellular location is the membrane. The protein operates within secondary metabolite biosynthesis. Its function is as follows. FAD-dependent monooxygenase; part of the gene cluster that mediates the biosynthesis of the indole diterpenes penitrems. The geranylgeranyl diphosphate (GGPP) synthase ptmG catalyzes the first step in penitrem biosynthesis via conversion of farnesyl pyrophosphate and isopentyl pyrophosphate into geranylgeranyl pyrophosphate (GGPP). Condensation of indole-3-glycerol phosphate with GGPP by the prenyl transferase ptmC then forms 3-geranylgeranylindole (3-GGI). Epoxidation by the FAD-dependent monooxygenase ptmM leads to a epoxidized-GGI that is substrate of the terpene cyclase ptmB for cyclization to yield paspaline. Paspaline is subsequently converted to 13-desoxypaxilline by the cytochrome P450 monooxygenase ptmP, the latter being then converted to paxilline by the cytochrome P450 monooxygenase ptmQ. Paxilline is converted to beta-paxitriol via C-10 ketoreduction by the short-chain dehydrogenase ptmH which can be monoprenylated at the C-20 by the indole diterpene prenyltransferase ptmD. A two-step elimination (acetylation and elimination) process performed by the O-acetyltransferase ptmV and ptmI leads to the production of the prenylated form of penijanthine. The FAD-linked oxidoreductase ptmO then converts the prenylated form of penijanthine into PC-M5 which is in turn transformed into PC-M4 by the aromatic dimethylallyltransferase ptmE. Five sequential oxidative transformations performed by the cytochrome P450 monooxygenases ptmK, ptmU, ptmL, ptmN and ptmJ yield the various penitrem compounds. PtmK, ptmU and ptmM are involved in the formation of the key bicyclic ring of penitrem C via the formation of the intermediates secopenitrem D and penitrem D. PtmL catalyzes the epoxidation of penitrem D and C to yield penitrem B and F, respectively. PtmJ catalyzes the last benzylic hydroxylation to convert penitrem B to prenitrem E and penitrem F to penitrem A. This chain is FAD-dependent monooxygenase ptmM, found in Penicillium ochrochloron.